A 227-amino-acid chain; its full sequence is Cytochrome c oxidase subunit 2 (227 aa).

At 1-14 (MAHAAQVGLQDATS) the chain is on the mitochondrial intermembrane side. A helical membrane pass occupies residues 15 to 45 (PIMEELITFHDHALMIIFLICFLVLYALFLT). Residues 46 to 59 (LTTKLTNTNISDAQ) are Mitochondrial matrix-facing. A helical membrane pass occupies residues 60-87 (EMETVWTILPAIILVLIALPSLRILYMT). Over 88–227 (DEVNDPSLTI…IFEMGPVFTL (140 aa)) the chain is Mitochondrial intermembrane. 6 residues coordinate Cu cation: histidine 161, cysteine 196, glutamate 198, cysteine 200, histidine 204, and methionine 207. Glutamate 198 contributes to the Mg(2+) binding site.

Belongs to the cytochrome c oxidase subunit 2 family. In terms of assembly, component of the cytochrome c oxidase (complex IV, CIV), a multisubunit enzyme composed of 14 subunits. The complex is composed of a catalytic core of 3 subunits MT-CO1, MT-CO2 and MT-CO3, encoded in the mitochondrial DNA, and 11 supernumerary subunits COX4I1 (or COX4I2), COX5A, COX5B, COX6A1 (or COX6A2), COX6B1 (or COX6B2), COX6C, COX7A2 (or COX7A1), COX7B, COX7C, COX8A and NDUFA4, which are encoded in the nuclear genome. The complex exists as a monomer or a dimer and forms supercomplexes (SCs) in the inner mitochondrial membrane with NADH-ubiquinone oxidoreductase (complex I, CI) and ubiquinol-cytochrome c oxidoreductase (cytochrome b-c1 complex, complex III, CIII), resulting in different assemblies (supercomplex SCI(1)III(2)IV(1) and megacomplex MCI(2)III(2)IV(2)). Found in a complex with TMEM177, COA6, COX18, COX20, SCO1 and SCO2. Interacts with TMEM177 in a COX20-dependent manner. Interacts with COX20. Interacts with COX16. Cu cation serves as cofactor.

It is found in the mitochondrion inner membrane. It catalyses the reaction 4 Fe(II)-[cytochrome c] + O2 + 8 H(+)(in) = 4 Fe(III)-[cytochrome c] + 2 H2O + 4 H(+)(out). Component of the cytochrome c oxidase, the last enzyme in the mitochondrial electron transport chain which drives oxidative phosphorylation. The respiratory chain contains 3 multisubunit complexes succinate dehydrogenase (complex II, CII), ubiquinol-cytochrome c oxidoreductase (cytochrome b-c1 complex, complex III, CIII) and cytochrome c oxidase (complex IV, CIV), that cooperate to transfer electrons derived from NADH and succinate to molecular oxygen, creating an electrochemical gradient over the inner membrane that drives transmembrane transport and the ATP synthase. Cytochrome c oxidase is the component of the respiratory chain that catalyzes the reduction of oxygen to water. Electrons originating from reduced cytochrome c in the intermembrane space (IMS) are transferred via the dinuclear copper A center (CU(A)) of subunit 2 and heme A of subunit 1 to the active site in subunit 1, a binuclear center (BNC) formed by heme A3 and copper B (CU(B)). The BNC reduces molecular oxygen to 2 water molecules using 4 electrons from cytochrome c in the IMS and 4 protons from the mitochondrial matrix. The chain is Cytochrome c oxidase subunit 2 (MT-CO2) from Homo sapiens (Human).